Consider the following 221-residue polypeptide: Thymidylate kinase (221 aa).

Residue 10 to 17 (GIDGAGKT) participates in ATP binding.

The protein belongs to the thymidylate kinase family.

It catalyses the reaction dTMP + ATP = dTDP + ADP. Phosphorylation of dTMP to form dTDP in both de novo and salvage pathways of dTTP synthesis. The chain is Thymidylate kinase from Desulforudis audaxviator (strain MP104C).